The primary structure comprises 64 residues: MSKITIVQCPQCGTDVEWGEQSPHRPFCSKKCQMIDFGEWADEENAIAGAPDMSDSDGWSEDQY.

Positions 9, 12, 28, and 32 each coordinate Zn(2+). The interval 45 to 64 (NAIAGAPDMSDSDGWSEDQY) is disordered. Over residues 54–64 (SDSDGWSEDQY) the composition is skewed to acidic residues.

Belongs to the DNA gyrase inhibitor YacG family. As to quaternary structure, interacts with GyrB. Requires Zn(2+) as cofactor.

Its function is as follows. Inhibits all the catalytic activities of DNA gyrase by preventing its interaction with DNA. Acts by binding directly to the C-terminal domain of GyrB, which probably disrupts DNA binding by the gyrase. The sequence is that of DNA gyrase inhibitor YacG from Vibrio parahaemolyticus serotype O3:K6 (strain RIMD 2210633).